A 143-amino-acid polypeptide reads, in one-letter code: Lysozyme C (143 aa).

Positions methionine 1–alanine 15 are cleaved as a signal peptide. A C-type lysozyme domain is found at lysine 16–leucine 143. Disulfide bonds link cysteine 21-cysteine 141, cysteine 45-cysteine 129, cysteine 79-cysteine 94, and cysteine 90-cysteine 108. Active-site residues include glutamate 50 and aspartate 67.

Belongs to the glycosyl hydrolase 22 family. As to quaternary structure, monomer.

The protein resides in the secreted. It carries out the reaction Hydrolysis of (1-&gt;4)-beta-linkages between N-acetylmuramic acid and N-acetyl-D-glucosamine residues in a peptidoglycan and between N-acetyl-D-glucosamine residues in chitodextrins.. Functionally, lysozymes have primarily a bacteriolytic function; those in tissues and body fluids are associated with the monocyte-macrophage system and enhance the activity of immunoagents. This is Lysozyme C from Takifugu rubripes (Japanese pufferfish).